The following is a 63-amino-acid chain: DNA gyrase inhibitor YacG (63 aa).

C9, C12, C28, and C32 together coordinate Zn(2+).

It belongs to the DNA gyrase inhibitor YacG family. As to quaternary structure, interacts with GyrB. Requires Zn(2+) as cofactor.

Its function is as follows. Inhibits all the catalytic activities of DNA gyrase by preventing its interaction with DNA. Acts by binding directly to the C-terminal domain of GyrB, which probably disrupts DNA binding by the gyrase. This is DNA gyrase inhibitor YacG from Salmonella paratyphi A (strain AKU_12601).